We begin with the raw amino-acid sequence, 313 residues long: Porphobilinogen deaminase (313 aa).

Cysteine 242 is modified (S-(dipyrrolylmethanemethyl)cysteine).

It belongs to the HMBS family. As to quaternary structure, monomer. The cofactor is dipyrromethane.

The enzyme catalyses 4 porphobilinogen + H2O = hydroxymethylbilane + 4 NH4(+). It participates in porphyrin-containing compound metabolism; protoporphyrin-IX biosynthesis; coproporphyrinogen-III from 5-aminolevulinate: step 2/4. Tetrapolymerization of the monopyrrole PBG into the hydroxymethylbilane pre-uroporphyrinogen in several discrete steps. This Pectobacterium carotovorum subsp. carotovorum (strain PC1) protein is Porphobilinogen deaminase.